The chain runs to 292 residues: uncharacterized protein (292 aa).

Residues S44 and Y106 each act as charge relay system in the active site. Catalysis depends on Y132, which acts as the Proton donor. The active-site Schiff-base intermediate with substrate is K161.

It belongs to the DapA family. Homotetramer.

Its subcellular location is the cytoplasm. This is an uncharacterized protein from Thermoplasma acidophilum (strain ATCC 25905 / DSM 1728 / JCM 9062 / NBRC 15155 / AMRC-C165).